The following is a 337-amino-acid chain: Heme A synthase (337 aa).

The next 5 helical transmembrane spans lie at 6–26, 87–107, 119–139, 154–174, and 192–212; these read ITKW…IGGI, FIHR…LIYF, LPYI…WYMV, LAFH…QLIK, and LIFS…GALV. Position 256 (H256) interacts with heme. The next 3 membrane-spanning stretches (helical) occupy residues 258-278, 285-305, and 308-328; these read LGGY…LKIE, IAYF…ITLL, and VPII…SIII. Residue H316 coordinates heme.

The protein belongs to the COX15/CtaA family. Type 2 subfamily. Interacts with CtaB. It depends on heme b as a cofactor.

The protein localises to the cell membrane. It carries out the reaction Fe(II)-heme o + 2 A + H2O = Fe(II)-heme a + 2 AH2. Its pathway is porphyrin-containing compound metabolism; heme A biosynthesis; heme A from heme O: step 1/1. In terms of biological role, catalyzes the conversion of heme O to heme A by two successive hydroxylations of the methyl group at C8. The first hydroxylation forms heme I, the second hydroxylation results in an unstable dihydroxymethyl group, which spontaneously dehydrates, resulting in the formyl group of heme A. The protein is Heme A synthase of Rickettsia massiliae (strain Mtu5).